Consider the following 292-residue polypeptide: 4-hydroxy-tetrahydrodipicolinate synthase (292 aa).

A pyruvate-binding site is contributed by Thr45. Tyr133 serves as the catalytic Proton donor/acceptor. Lys161 (schiff-base intermediate with substrate) is an active-site residue. Residue Ile203 participates in pyruvate binding.

It belongs to the DapA family. As to quaternary structure, homotetramer; dimer of dimers.

It localises to the cytoplasm. The catalysed reaction is L-aspartate 4-semialdehyde + pyruvate = (2S,4S)-4-hydroxy-2,3,4,5-tetrahydrodipicolinate + H2O + H(+). It functions in the pathway amino-acid biosynthesis; L-lysine biosynthesis via DAP pathway; (S)-tetrahydrodipicolinate from L-aspartate: step 3/4. Its function is as follows. Catalyzes the condensation of (S)-aspartate-beta-semialdehyde [(S)-ASA] and pyruvate to 4-hydroxy-tetrahydrodipicolinate (HTPA). This chain is 4-hydroxy-tetrahydrodipicolinate synthase, found in Shigella dysenteriae serotype 1 (strain Sd197).